A 217-amino-acid chain; its full sequence is Small ribosomal subunit protein uS11m (217 aa).

Residues 1–59 (MLLQPVWKGCRWTQFVRPIRRWNSTGTNRGVPFSFKDISNQEDITNISYPSSSDSVLTK) constitute a mitochondrion transit peptide.

Belongs to the universal ribosomal protein uS11 family. Component of the mitochondrial small ribosomal subunit (mt-SSU). Mature yeast 74S mitochondrial ribosomes consist of a small (37S) and a large (54S) subunit. The 37S small subunit contains a 15S ribosomal RNA (15S mt-rRNA) and 34 different proteins. The 54S large subunit contains a 21S rRNA (21S mt-rRNA) and 46 different proteins.

It is found in the mitochondrion. Its function is as follows. Component of the mitochondrial ribosome (mitoribosome), a dedicated translation machinery responsible for the synthesis of mitochondrial genome-encoded proteins, including at least some of the essential transmembrane subunits of the mitochondrial respiratory chain. The mitoribosomes are attached to the mitochondrial inner membrane and translation products are cotranslationally integrated into the membrane. The sequence is that of Small ribosomal subunit protein uS11m (MRPS18) from Saccharomyces cerevisiae (strain ATCC 204508 / S288c) (Baker's yeast).